Reading from the N-terminus, the 240-residue chain is MEKPKYKRIVLKLSGEALAGEQGNGINPTVIQSIAKQVKEIAELEVEVAVVVGGGNLWRGKTGSDLGMDRATADYMGMLATVMNSLALQDSLETLGIQSRVQTSIEMRQVAEPYIRRKAIRHLEKKRVVIFAAGTGNPYFSTDTTAALRAAEIEADVILMAKNNVDGVYNADPRKDESAVKYESLSYLDVLKDGLEVMDSTASSLCMDNDIPLIVFSIMEEGNIKRAVIGESIGTIVRGK.

ATP is bound at residue 12-15 (KLSG). An involved in allosteric activation by GTP region spans residues 20–25 (GEQGNG). Gly-54 contributes to the UMP binding site. 2 residues coordinate ATP: Gly-55 and Arg-59. UMP contacts are provided by residues Asp-74 and 135–142 (TGNPYFST). The ATP site is built by Asn-163, Tyr-169, and Asp-172.

Belongs to the UMP kinase family. Homohexamer. Interacts with BrxC.

It is found in the cytoplasm. The catalysed reaction is UMP + ATP = UDP + ADP. The protein operates within pyrimidine metabolism; CTP biosynthesis via de novo pathway; UDP from UMP (UMPK route): step 1/1. Allosterically activated by GTP. Can also be activated by dGTP and 3'-anthraniloyl-2'-deoxyguanosine-5'-triphosphate (Ant-dGTP). Inhibited by UTP, 5-bromo-UTP and 5-iodo-UTP. Functionally, catalyzes the reversible phosphorylation of UMP to UDP, with ATP or dATP as the most efficient phosphate donors. Is also able to phosphorylate 5-fluoro-UMP and 6-aza-UMP. In Bacillus subtilis (strain 168), this protein is Uridylate kinase (pyrH).